Here is a 180-residue protein sequence, read N- to C-terminus: MSRVGRLPIAVPAGITVTVTPDNVVTVKGPKGELVKTMHKDINIAVENNEVIVTRPSDQKAHRALHGLTRALINNMVIGVNEGYQKTLELVGVGYRAQLQGKKLVMNLGYSHPVEIEPIDGITFETPAATKVIVKGIDKEKVGAAAADIRKWRLPEPYKGKGIKFENEVIRRKEGKTGKK.

The protein belongs to the universal ribosomal protein uL6 family. In terms of assembly, part of the 50S ribosomal subunit.

In terms of biological role, this protein binds to the 23S rRNA, and is important in its secondary structure. It is located near the subunit interface in the base of the L7/L12 stalk, and near the tRNA binding site of the peptidyltransferase center. The chain is Large ribosomal subunit protein uL6 from Clostridium botulinum (strain Alaska E43 / Type E3).